The sequence spans 360 residues: BLOC-1-related complex subunit 6 (360 aa).

Positions 1–10 are enriched in basic and acidic residues; sequence MEAARGRLGP. Residues 1–201 form a disordered region; that stretch reads MEAARGRLGP…AGAGGGRRAT (201 aa). A compositionally biased stretch (polar residues) spans 23–35; sequence VTFSGRPSRTLSK. Thr41 carries the post-translational modification Phosphothreonine. Residues 71-83 show a composition bias toward basic and acidic residues; that stretch reads HRPELDTWEDKPS. The span at 89 to 100 shows a compositional bias: low complexity; it reads SGARGSRGTSGS. Ser130 bears the Phosphoserine mark. Acidic residues predominate over residues 144–156; sequence EGDDDDDGDDEEA. Position 173 is a phosphoserine (Ser173). A compositionally biased stretch (gly residues) spans 179–198; it reads GACGGGGSSSSGEAGAGGGR. Thr201 bears the Phosphothreonine mark. Ser204 bears the Phosphoserine mark.

The protein belongs to the BORCS6 family. As to quaternary structure, component of the BLOC-one-related complex (BORC) which is composed of BLOC1S1, BLOC1S2, BORCS5, BORCS6, BORCS7, BORCS8, KXD1 and SNAPIN.

The protein resides in the lysosome membrane. Functionally, as part of the BORC complex may play a role in lysosomes movement and localization at the cell periphery. Associated with the cytosolic face of lysosomes, the BORC complex may recruit ARL8B and couple lysosomes to microtubule plus-end-directed kinesin motor. The polypeptide is BLOC-1-related complex subunit 6 (Rattus norvegicus (Rat)).